The chain runs to 359 residues: Cyclic AMP response element-binding protein B (359 aa).

Disordered stretches follow at residues Met-1–Gly-73 and Val-185–Ile-238. The span at Asn-9–Ala-32 shows a compositional bias: low complexity. Residues Val-33–Asn-47 show a composition bias toward gly residues. A compositionally biased stretch (low complexity) spans Pro-48–Ala-70. Residues Lys-198 to Ser-257 enclose the KID domain. 3 positions are modified to phosphoserine: Ser-209, Ser-212, and Ser-214. Residues Asp-217–Arg-227 show a composition bias toward basic and acidic residues. The bZIP domain occupies Thr-300–Asp-359. Positions Arg-301 to Lys-326 are basic motif. A leucine-zipper region spans residues Leu-328–Leu-349.

It belongs to the bZIP family. ATF subfamily. As to quaternary structure, homodimer. As to expression, most cells of the adult brain; cell bodies, but not neuropil.

Its subcellular location is the nucleus. Its function is as follows. Isoform E is a PKA-dependent transcriptional activator. Isoform J is a direct antagonist of activation by isoform E in cell culture. Binds the cAMP response element (CRE) (consensus: 5'-GTGACGT[AC][AG]-3'), a sequence present in many viral and cellular promoters. Has a role in long-term memory. The protein is Cyclic AMP response element-binding protein B of Drosophila melanogaster (Fruit fly).